Consider the following 554-residue polypeptide: Serine/threonine-protein kinase ROP18 (554 aa).

A helical transmembrane segment spans residues 17-40 (GLATLLPKTACLAGLNVALVFLLF). The 280-residue stretch at 252–531 (LVRGAPLGSG…PLQALETAAF (280 aa)) folds into the Protein kinase domain. Residues glycine 262, alanine 264, and lysine 281 each coordinate ATP. Asparagine 306 carries an N-linked (GlcNAc...) asparagine glycan. Residues methionine 357, alanine 359, and aspartate 362 each contribute to the ATP site. N-linked (GlcNAc...) asparagine glycosylation occurs at asparagine 377. Residue aspartate 409 is the Proton acceptor of the active site. Aspartate 427 is an ATP binding site. Mg(2+) is bound at residue aspartate 427. An N-linked (GlcNAc...) asparagine glycan is attached at asparagine 434. A disulfide bridge links cysteine 478 with cysteine 497.

It belongs to the protein kinase superfamily. Ser/Thr protein kinase family. In terms of assembly, component of a complex at least composed of ROP18, GRA7 and ROP2. Component of a complex at least composed of ROP18 and ROP5. Interacts with GRA7 in the absence of ROP5. Interacts with mouse IRGB6 (TGTP1/TGTP2).

Its subcellular location is the parasitophorous vacuole membrane. It is found in the cytoplasmic vesicle. It localises to the secretory vesicle. The protein localises to the rhoptry. The enzyme catalyses L-threonyl-[protein] + ATP = O-phospho-L-threonyl-[protein] + ADP + H(+). It catalyses the reaction L-seryl-[protein] + ATP = O-phospho-L-seryl-[protein] + ADP + H(+). Its activity is regulated as follows. Kinase activity is enhanced by polymorphic pseudokinase ROP5. Functionally, protein kinase. Virulence factor. Mediates parasite survival in mouse macrophages and monocytes. Reduces the accumulation of mouse IRGA6 (IIGP1) and IRGB6 (TGTP1/TGTP2), immunity-related GTPases (IRGs) that protect mice from infection by certain intracellular pathogens, on the parasitophorous vacuole and IRG-mediated killing of parasites by mouse cells; probably in connection with ROP5. In complex with GRA7, targets IRGs to prevent IRG-mediated parasite killing by mouse cells. Phosphorylates mouse IRGA6 (IIGP1); its activity toward mouse IRGA6 is promoted by GRA7 or ROP5. Phosphorylates mouse IRGB6 (TGTP1/TGTP2). Phosphorylates mouse IRGB10 (GM12250). Does not affect IFN-gamma (IFNG)-mediated parasite killing in human cells that do not possess the large variety of IRGs. The sequence is that of Serine/threonine-protein kinase ROP18 from Toxoplasma gondii.